Consider the following 242-residue polypeptide: Uridylate kinase (242 aa).

An ATP-binding site is contributed by 16–19; it reads KVSG. UMP is bound at residue G58. G59 and R63 together coordinate ATP. Residues D78 and 139-146 each bind UMP; that span reads TGNPFCTT. The ATP site is built by T166, Q167, Y172, and D175.

The protein belongs to the UMP kinase family. Homohexamer.

It localises to the cytoplasm. The enzyme catalyses UMP + ATP = UDP + ADP. Its pathway is pyrimidine metabolism; CTP biosynthesis via de novo pathway; UDP from UMP (UMPK route): step 1/1. Its activity is regulated as follows. Inhibited by UTP. Functionally, catalyzes the reversible phosphorylation of UMP to UDP. This chain is Uridylate kinase, found in Rickettsia prowazekii (strain Madrid E).